The sequence spans 483 residues: Regulatory protein ViaA (483 aa).

Belongs to the ViaA family. As to quaternary structure, homodimer. Interacts with RavA.

It is found in the cytoplasm. Functionally, component of the RavA-ViaA chaperone complex, which may act on the membrane to optimize the function of some of the respiratory chains. ViaA stimulates the ATPase activity of RavA. In Salmonella arizonae (strain ATCC BAA-731 / CDC346-86 / RSK2980), this protein is Regulatory protein ViaA.